The primary structure comprises 43 residues: Myotoxin-1 (43 aa).

3 disulfides stabilise this stretch: cysteine 4-cysteine 36, cysteine 11-cysteine 30, and cysteine 18-cysteine 37.

The protein belongs to the crotamine-myotoxin family. As to quaternary structure, monomer. As to expression, expressed by the venom gland.

The protein localises to the secreted. Cationic peptide that possesses multiple functions. It acts as a cell-penetrating peptide (CPP), and as a potent voltage-gated potassium channel (Kv) inhibitor. It exhibits antimicrobial activities, hind limb paralysis, and severe muscle necrosis by a non-enzymatic mechanism. In Crotalus concolor (Midget faded rattlesnake), this protein is Myotoxin-1.